Here is a 363-residue protein sequence, read N- to C-terminus: Chorismate synthase (363 aa).

NADP(+)-binding residues include arginine 48 and arginine 54. Residues 125–127 (RSS), 238–239 (NA), glycine 278, 293–297 (KPTSS), and arginine 319 each bind FMN.

It belongs to the chorismate synthase family. As to quaternary structure, homotetramer. FMNH2 is required as a cofactor.

It catalyses the reaction 5-O-(1-carboxyvinyl)-3-phosphoshikimate = chorismate + phosphate. The protein operates within metabolic intermediate biosynthesis; chorismate biosynthesis; chorismate from D-erythrose 4-phosphate and phosphoenolpyruvate: step 7/7. Catalyzes the anti-1,4-elimination of the C-3 phosphate and the C-6 proR hydrogen from 5-enolpyruvylshikimate-3-phosphate (EPSP) to yield chorismate, which is the branch point compound that serves as the starting substrate for the three terminal pathways of aromatic amino acid biosynthesis. This reaction introduces a second double bond into the aromatic ring system. This Acidithiobacillus ferrooxidans (strain ATCC 23270 / DSM 14882 / CIP 104768 / NCIMB 8455) (Ferrobacillus ferrooxidans (strain ATCC 23270)) protein is Chorismate synthase.